A 310-amino-acid chain; its full sequence is Ribonuclease Z (310 aa).

Zn(2+) contacts are provided by histidine 64, histidine 66, aspartate 68, histidine 69, histidine 146, aspartate 215, and histidine 273. The Proton acceptor role is filled by aspartate 68.

The protein belongs to the RNase Z family. In terms of assembly, homodimer. It depends on Zn(2+) as a cofactor.

The catalysed reaction is Endonucleolytic cleavage of RNA, removing extra 3' nucleotides from tRNA precursor, generating 3' termini of tRNAs. A 3'-hydroxy group is left at the tRNA terminus and a 5'-phosphoryl group is left at the trailer molecule.. Functionally, zinc phosphodiesterase, which displays some tRNA 3'-processing endonuclease activity. Probably involved in tRNA maturation, by removing a 3'-trailer from precursor tRNA. This is Ribonuclease Z from Aeropyrum pernix (strain ATCC 700893 / DSM 11879 / JCM 9820 / NBRC 100138 / K1).